The chain runs to 504 residues: Immunoglobulin-binding protein EibC (504 aa).

The N-terminal stretch at 1–26 (MSKKFTMTLLSSSLAGLLVMSGGVSA) is a signal peptide. The segment at 27–413 (QEEKYTVPYA…IAANTRTLQQ (387 aa)) is surface exposed passenger domain. The Extracellular portion of the chain corresponds to 27–453 (QEEKYTVPYA…GLFQPYSVGK (427 aa)). Residues 154 to 280 (DAKASGEFSV…TGTESDKTYG (127 aa)) are head domain. The tract at residues 281 to 296 (TRVLGGLSDGTRNSDA) is neck. The right-handed coiled-coil (RHcc) stretch occupies residues 297–342 (ATVGQLNRKVGGVYDDVKARITVESEKQKKYTDQKTSEVNEKVEAR). Positions 343–368 (TTVGVDSDGKLTRAEGATKTIAVNDG) are saddle domain. The tract at residues 369-434 (LVALSGRTDR…INENHKEMKR (66 aa)) is left-handed coiled-coil (LHcc). A coiled-coil region spans residues 411 to 438 (LQQHSARLDSQQRQINENHKEMKRAAAQ). An outer membrane translocation of the passenger domain region spans residues 411-453 (LQQHSARLDSQQRQINENHKEMKRAAAQSAALTGLFQPYSVGK). Beta stranded transmembrane passes span 454 to 464 (FNATAAVGGYS), 467 to 478 (QALAVGVGYRFN), 481 to 490 (TAAKAGVAFS), and 494 to 504 (ASWNVGVNFEF). The interval 454–504 (FNATAAVGGYSDQQALAVGVGYRFNEQTAAKAGVAFSDGDASWNVGVNFEF) is translocator domain.

The protein belongs to the autotransporter-2 (AT-2) (TC 1.B.40) family. Eib subfamily. As to quaternary structure, homotrimer; can probably form mixed heterotrimers in vivo. Will form mixed heterotrimers with EibD; these are correctly located in the outer membrane and bind IgG Fc, although less well than homotrimers. In denaturing gels runs as a band of about 200 kDa. Binds the Fc portion of immunoglobulins; binds more than 1 Fc per subunit.

It is found in the cell surface. Its subcellular location is the cell outer membrane. Functionally, binds (in a non-immune fashion) to the Fc portion of human IgG and less well to IgA; binding occurs on the cell surface. Confers the ability to survive exposure to human serum exposure. Binds to the Fc portion of human IgG and IgA and to whole mouse antibodies also via Fc. The chain is Immunoglobulin-binding protein EibC from Escherichia coli.